We begin with the raw amino-acid sequence, 103 residues long: Small ribosomal subunit protein bS18c (103 aa).

It belongs to the bacterial ribosomal protein bS18 family. As to quaternary structure, part of the 30S ribosomal subunit.

The protein resides in the plastid. The protein localises to the chloroplast. This Chlorella vulgaris (Green alga) protein is Small ribosomal subunit protein bS18c (rps18).